A 241-amino-acid chain; its full sequence is Probable transcriptional regulatory protein SAR11_0592 (241 aa).

The segment at 1–24 (MSGHSKWASIKHSKGKADKQRSKV) is disordered.

Belongs to the TACO1 family.

Its subcellular location is the cytoplasm. This chain is Probable transcriptional regulatory protein SAR11_0592, found in Pelagibacter ubique (strain HTCC1062).